A 1071-amino-acid polypeptide reads, in one-letter code: Methionine S-methyltransferase (1071 aa).

A2 bears the N-acetylalanine mark.

This sequence belongs to the class I-like SAM-binding methyltransferase superfamily. In terms of assembly, homotetramer. Expressed in roots, rosette leaves and cauline leaves. Expressed at a lower level in developing seeds.

Its subcellular location is the cytoplasm. The enzyme catalyses L-methionine + S-adenosyl-L-methionine = S-methyl-L-methionine + S-adenosyl-L-homocysteine. In terms of biological role, catalyzes the S-methylmethionine (SMM) biosynthesis from adenosyl-L-homocysteine (AdoMet) and methionine. SMM biosynthesis (by MMT1) and degradation (by HMT-1, HMT-2 and HMT-3) constitute the SMM cycle in plants, which is probably required to achieve short term control of AdoMet level. Also able to catalyze the selenium-methylmethionine (SeMM) from AdoMet and selenium-methionine (SeMet). May play a role in phoem sulfur transport; such function is however not essential. This Arabidopsis thaliana (Mouse-ear cress) protein is Methionine S-methyltransferase (MMT1).